Reading from the N-terminus, the 476-residue chain is MHYHIVGIAGAGMSAIAHILLDQGHTVSGSDLQQNTLTAALEQRGARIRYGHEPAFVGDADRLVATSAVQDEHIELVEARKRGIPVLRRADLWREWSHGRQVVAVAGTHGKTTTTALIALMLTRAGIAPGFLIGGETPDLGVNARWGNPAAPLVVEADEYDRTFLALTPDIAIITNVEWEHVDIYPSPDEYEAAFRTFARQVAHPQRLIVCGDNAGARRVVGHPDAQQYGIEEAIARNPASCRLALMDWMAANVRYDGSMTHFDLWRYDRRTCGTRLEGMYTMRLVGDHNVQNALAAIAAATTLGIDRTAIGAALAEYRGARRRFDIKGEVNGITVIDDYAHHPTEVRATLAAARARFPQHRIVVYLQPHTFSRTYAMLDNWTHAFDAADIVRIGDVYPARETGEPRAAARALAGRIAHPDVEVVGDVATATATITALLQPGDLLLTLGAGDGYRVGEMALLALGQADDQSESSET.

ATP is bound at residue 107 to 113 (GTHGKTT).

Belongs to the MurCDEF family.

The protein resides in the cytoplasm. It catalyses the reaction UDP-N-acetyl-alpha-D-muramate + L-alanine + ATP = UDP-N-acetyl-alpha-D-muramoyl-L-alanine + ADP + phosphate + H(+). Its pathway is cell wall biogenesis; peptidoglycan biosynthesis. In terms of biological role, cell wall formation. This chain is UDP-N-acetylmuramate--L-alanine ligase, found in Roseiflexus castenholzii (strain DSM 13941 / HLO8).